A 1216-amino-acid polypeptide reads, in one-letter code: Apical endosomal glycoprotein (1216 aa).

Residues 1-22 (MPLSSHLLPALVLFLAGSSGWA) form the signal peptide. Over 23-1151 (WVPNHCRSPG…SPGNTAAPGS (1129 aa)) the chain is Extracellular. In terms of domain architecture, LDL-receptor class A 1; truncated spans 26–53 (NHCRSPGQAVCNFVCDCRDCSDEAQCGY). In terms of domain architecture, MAM 1 spans 64-222 (FACDFEQDPC…DDLEFWDCGL (159 aa)). Residue asparagine 203 is glycosylated (N-linked (GlcNAc...) asparagine). The LDL-receptor class A 2 domain occupies 228 to 266 (NCPPGHHHCQNKVCVEPQQLCDGEDNCGDLSDENPLTCG). 3 disulfide bridges follow: cysteine 229–cysteine 241, cysteine 236–cysteine 254, and cysteine 248–cysteine 265. Positions 269–425 (IATDFETGLG…DLILSDHCRP (157 aa)) constitute an MAM 2 domain. Positions 280–307 (WNRSEGWSRNHRAGGPERPSWPRRDHSR) are disordered. Residues asparagine 281 and asparagine 339 are each glycosylated (N-linked (GlcNAc...) asparagine). Residues 429 to 455 (VSTLQPLPPGPRAPAPQPLPPSSRLQD) form a disordered region. Residues 434–449 (PLPPGPRAPAPQPLPP) show a composition bias toward pro residues. The 36-residue stretch at 456-491 (SCKQGHLACGDLCVPPEQLCDFEEQCAGGEDEQACG) folds into the LDL-receptor class A 3 domain. 3 disulfide bridges follow: cysteine 457-cysteine 468, cysteine 464-cysteine 481, and cysteine 475-cysteine 490. MAM domains are found at residues 491-644 (GTTD…DCSP), 654-809 (VSCN…PCWA), 811-969 (NYCS…PCPQ), and 971-1138 (GSCD…HCQQ). Residues asparagine 583 and asparagine 636 are each glycosylated (N-linked (GlcNAc...) asparagine). Residue asparagine 835 is glycosylated (N-linked (GlcNAc...) asparagine). Residues 1152-1172 (VPAVVGSALLLLMLLVLLGLG) traverse the membrane as a helical segment. The Cytoplasmic portion of the chain corresponds to 1173–1216 (GRRWLQKKGSCPFQSNTEATAPGFDNILFNADGVTLPASVTSDP).

It localises to the membrane. Its function is as follows. Probably involved in the sorting and selective transport of receptors and ligands across polarized epithelia. The protein is Apical endosomal glycoprotein of Homo sapiens (Human).